Here is an 815-residue protein sequence, read N- to C-terminus: MGSNLPSQPNLRLTIIAADGLYKRDVFRFPDPFAVATVGGEQTQTTSVIKKTLNPYWNEMFDLRVNEESILAIQIFDQKKFKKKDQGFLGVINVRIGDVIDLEMGGDEMLTRDLKKSNDNLVVHGKLIINLSTNLSTPNTNQANGLHRSHIQPSTSSGLVPQVGASAAHPAASPAPIDPAASNPSLHPQRVPSTNRPPSTVAPGAAAGATPTNTQGSRTNLSSFEDSQGRLPAGWERREDNLGRTYYVDHNTRTTTWTRPSSNYNEQTQRTQREANMQLERRAHQSRMLPEDRTGANSPNLPETSQQAPTPPAGGSANAVSMMATGATTAGTGELPPGWEQRTTPEGRPYFVDHNTRTTTWVDPRRQQYIRMYGQNANGTNTTIQQQPVSQLGPLPSGWEMRLTNTARVYFVDHNTKTTTWDDPRLPSSLDQGVPQYKRDFRRKLIYFRSQPALRIMSGQCHVKVRRNNIFEDSYAEIMRQSASDLKKRLMIKFDGEDGLDYGGLSREFFFLLSHEMFNPFYCLFEYSAHDNYTLQINPHSGVNPEHLNYFKFIGRVVGLAIFHRRFLDSFFIGAFYKMMLRKKVSLQDMEGVDEDLHRNLTWTLDNDIEGVLELTFAVDDEKFGERRTIDLKPGGRDIPVTNENKGEYVELVTEWKIVKRVEEQFNAFMSGFNELIPADLVNVFDERELELLIGGIADIDVDDWKKHTDYRGYQESDDVIQNFWKVVRTWDAEQKSRLLQFTTGTSRIPVNGFKDLQGSDGPRRFTIEKSGDPVALPKSHTCFNRLDLPPYKTYETLEHKMSIAVEETLGFGQE.

The C2 domain occupies 1–112; it reads MGSNLPSQPN…EMGGDEMLTR (112 aa). Disordered stretches follow at residues 134 to 237 and 253 to 353; these read NLST…GWER and RTTT…YFVD. 2 stretches are compositionally biased toward low complexity: residues 165–185 and 202–212; these read ASAA…SNPS and APGAAAGATPT. Polar residues-rich tracts occupy residues 213-226 and 253-270; these read NTQG…SFED and RTTT…QTQR. Residues 229–262 enclose the WW 1 domain; that stretch reads GRLPAGWERREDNLGRTYYVDHNTRTTTWTRPSS. Over residues 279–294 the composition is skewed to basic and acidic residues; sequence LERRAHQSRMLPEDRT. Residues 295–308 are compositionally biased toward polar residues; that stretch reads GANSPNLPETSQQA. The span at 324–333 shows a compositional bias: low complexity; sequence ATGATTAGTG. 2 consecutive WW domains span residues 333-366 and 393-426; these read GELP…DPRR and GPLP…DPRL. An HECT domain is found at 482–815; the sequence is SASDLKKRLM…VEETLGFGQE (334 aa). The active-site Glycyl thioester intermediate is Cys783.

The protein belongs to the RSP5/NEDD4 family. In terms of assembly, interacts with creD.

It localises to the cytoplasm. It catalyses the reaction S-ubiquitinyl-[E2 ubiquitin-conjugating enzyme]-L-cysteine + [acceptor protein]-L-lysine = [E2 ubiquitin-conjugating enzyme]-L-cysteine + N(6)-ubiquitinyl-[acceptor protein]-L-lysine.. Its pathway is protein modification; protein ubiquitination. In terms of biological role, E3 ubiquitin-protein ligase which accepts ubiquitin from an E2 ubiquitin-conjugating enzyme in the form of a thioester and then directly transfers the ubiquitin to targeted substrates. Probably involved in the regulatory network controlling carbon source utilization. In Aspergillus clavatus (strain ATCC 1007 / CBS 513.65 / DSM 816 / NCTC 3887 / NRRL 1 / QM 1276 / 107), this protein is Probable E3 ubiquitin-protein ligase hulA (hulA).